A 457-amino-acid chain; its full sequence is Biphenyl dioxygenase subunit alpha (457 aa).

In terms of domain architecture, Rieske spans 58 to 174; that stretch reads WLMLGHETHI…VETYKGLVFA (117 aa). Residues Cys100, His102, Cys120, and His123 each contribute to the [2Fe-2S] cluster site. The Fe cation site is built by His233 and His239.

Belongs to the bacterial ring-hydroxylating dioxygenase alpha subunit family. Heterohexamer consisting of three BphA subunits and three BphE subunits. A ferredoxin (BphF) and a ferredoxin reductase (BphG) must be present to obtain activity. Requires [2Fe-2S] cluster as cofactor. Fe cation serves as cofactor.

The enzyme catalyses biphenyl + NADH + O2 + H(+) = (2R,3S)-3-phenylcyclohexa-3,5-diene-1,2-diol + NAD(+). It participates in xenobiotic degradation; biphenyl degradation; 2-hydroxy-2,4-pentadienoate and benzoate from biphenyl: step 1/4. This is Biphenyl dioxygenase subunit alpha (bphA) from Comamonas testosteroni (Pseudomonas testosteroni).